Here is a 211-residue protein sequence, read N- to C-terminus: Protein-L-isoaspartate O-methyltransferase (211 aa).

Ser62 is a catalytic residue.

It belongs to the methyltransferase superfamily. L-isoaspartyl/D-aspartyl protein methyltransferase family.

The protein localises to the cytoplasm. It carries out the reaction [protein]-L-isoaspartate + S-adenosyl-L-methionine = [protein]-L-isoaspartate alpha-methyl ester + S-adenosyl-L-homocysteine. Catalyzes the methyl esterification of L-isoaspartyl residues in peptides and proteins that result from spontaneous decomposition of normal L-aspartyl and L-asparaginyl residues. It plays a role in the repair and/or degradation of damaged proteins. The sequence is that of Protein-L-isoaspartate O-methyltransferase from Shewanella denitrificans (strain OS217 / ATCC BAA-1090 / DSM 15013).